Consider the following 515-residue polypeptide: 3-[(3aS,4S,7aS)-7a-methyl-1,5-dioxo-octahydro-1H-inden-4-yl]propanoyl:CoA ligase (515 aa).

Residues 185-193 (TSGTTGRSK), D398, R413, and K504 contribute to the ATP site.

It belongs to the ATP-dependent AMP-binding enzyme family.

It catalyses the reaction 3-[(3aS,4S,7aS)-7a-methyl-1,5-dioxo-octahydro-1H-inden-4-yl]propanoate + ATP + CoA = 3-[(3aS,4S,7aS)-7a-methyl-1,5-dioxo-octahydro-1H-inden-4-yl]propanoyl-CoA + AMP + diphosphate. In terms of biological role, involved in the catabolism of the rings C and D of cholesterol. Catalyzes the ATP-dependent CoA thioesterification of 3aalpha-H-4alpha(3'-propanoate)-7abeta-methylhexahydro-1,5-indanedione (HIP). In Rhodococcus jostii (strain RHA1), this protein is 3-[(3aS,4S,7aS)-7a-methyl-1,5-dioxo-octahydro-1H-inden-4-yl]propanoyl:CoA ligase.